The sequence spans 273 residues: MEGLSGNCPASHCRDFISHPALGRHSGSLASHQGTVYPDITTQDAGRQFPAPQASSGTSLGYGYAFGSPYYGCRLSYSHNVNLQQKSYHPAEKYMETSGALPAEELSSRSKEFAIYPSFASSYQTVPGYLDVPVVPGISAHPESRHEALFPMDSYQHWALSNGWDEQLYCSKEQTHFNHLWKSQFSDVVPHQAEMNGYRRGRKKRVPYTKIQLKELEKEYAASKFITKDRRRRISATTSLSERQVTIWFQNRRVKEKKFVCKSSKSSTNMHSV.

Positions 201 to 260 (GRKKRVPYTKIQLKELEKEYAASKFITKDRRRRISATTSLSERQVTIWFQNRRVKEKKFV) form a DNA-binding region, homeobox.

It belongs to the Abd-B homeobox family.

It is found in the nucleus. Its function is as follows. Sequence-specific transcription factor which is part of a developmental regulatory system that provides cells with specific positional identities on the anterior-posterior axis. Plays a role in early embryonic development. This Danio rerio (Zebrafish) protein is Homeobox protein Hox-C13b (hoxc13b).